The sequence spans 273 residues: MLPSIAKHVASHQINPLKKHGQNFIFDSSLCDKIVRASHLAENSRVLEIGPGTGGLTRSILQKNPESLTVIETDERFIPLLNEIKEYYPNLNIIKQDALKINLTDLDYDKVTIISNLPYHIGTELVIRWLKEARLITDMTLMLQKEVVERICAMPSTKAYGRLSVICQLIAKVEKCFDVSPTAFYPPPKVYSAIVKLIPLANPPSIALINRVEKITTFAFAGRRKMIKSSLKNLVPNIHEVLTQLKINDNYRAENLAPQDYLRIAMSLSVNKL.

S-adenosyl-L-methionine-binding residues include Asn-23, Ile-25, Gly-50, Glu-72, Asp-97, and Asn-116.

The protein belongs to the class I-like SAM-binding methyltransferase superfamily. rRNA adenine N(6)-methyltransferase family. RsmA subfamily.

It is found in the cytoplasm. The catalysed reaction is adenosine(1518)/adenosine(1519) in 16S rRNA + 4 S-adenosyl-L-methionine = N(6)-dimethyladenosine(1518)/N(6)-dimethyladenosine(1519) in 16S rRNA + 4 S-adenosyl-L-homocysteine + 4 H(+). In terms of biological role, specifically dimethylates two adjacent adenosines (A1518 and A1519) in the loop of a conserved hairpin near the 3'-end of 16S rRNA in the 30S particle. May play a critical role in biogenesis of 30S subunits. The chain is Ribosomal RNA small subunit methyltransferase A from Rickettsia akari (strain Hartford).